Consider the following 485-residue polypeptide: uncharacterized protein (485 aa).

13 helical membrane passes run 13-33 (WSALSSLTIIVLGFLQMVILS), 38-58 (PFEFGVLSIMTVVFLFTDMLA), 79-99 (ALYWVNIFLGVFLFVVTIILS), 111-131 (LSFLIQLTALVFIIMPHGQQY), 160-180 (VIIGIITKNASCAVFGYLLTV), 211-231 (LLFSFYLTLDSILNYINSSIT), 234-254 (IVARVLGAIYVGGYNLSFNVA), 297-317 (INFPALLGLCIIAKDFVYLVF), 321-341 (WLFIVPTLQLLCIAGAMRMVA), 365-385 (IIIFIPVLYFSTIWNGMVGAA), 388-408 (FLICQAINALLSYFFLLKPVL), 420-440 (FIPFVHTLPMILLLLVCDIYI), and 445-465 (LTFFILKIVIGGGVYILTIFI).

The protein belongs to the polysaccharide synthase family.

It is found in the cell membrane. This is an uncharacterized protein from Klebsiella pneumoniae.